Reading from the N-terminus, the 179-residue chain is Acireductone dioxygenase (179 aa).

H88, H90, E94, and H133 together coordinate Fe(2+). Residues H88, H90, E94, and H133 each contribute to the Ni(2+) site.

It belongs to the acireductone dioxygenase (ARD) family. As to quaternary structure, monomer. Interacts with MMP14. Fe(2+) is required as a cofactor. Requires Ni(2+) as cofactor.

Its subcellular location is the cytoplasm. The protein localises to the nucleus. It is found in the cell membrane. The catalysed reaction is 1,2-dihydroxy-5-(methylsulfanyl)pent-1-en-3-one + O2 = 4-methylsulfanyl-2-oxobutanoate + formate + 2 H(+). The enzyme catalyses 1,2-dihydroxy-5-(methylsulfanyl)pent-1-en-3-one + O2 = 3-(methylsulfanyl)propanoate + CO + formate + 2 H(+). It functions in the pathway amino-acid biosynthesis; L-methionine biosynthesis via salvage pathway; L-methionine from S-methyl-5-thio-alpha-D-ribose 1-phosphate: step 5/6. Functionally, catalyzes 2 different reactions between oxygen and the acireductone 1,2-dihydroxy-3-keto-5-methylthiopentene (DHK-MTPene) depending upon the metal bound in the active site. Fe-containing acireductone dioxygenase (Fe-ARD) produces formate and 2-keto-4-methylthiobutyrate (KMTB), the alpha-ketoacid precursor of methionine in the methionine recycle pathway. Ni-containing acireductone dioxygenase (Ni-ARD) produces methylthiopropionate, carbon monoxide and formate, and does not lie on the methionine recycle pathway. Also down-regulates cell migration mediated by MMP14. In Macaca mulatta (Rhesus macaque), this protein is Acireductone dioxygenase.